We begin with the raw amino-acid sequence, 320 residues long: tRNA pseudouridine synthase B (320 aa).

Asp49 functions as the Nucleophile in the catalytic mechanism.

It belongs to the pseudouridine synthase TruB family. Type 1 subfamily.

It catalyses the reaction uridine(55) in tRNA = pseudouridine(55) in tRNA. Responsible for synthesis of pseudouridine from uracil-55 in the psi GC loop of transfer RNAs. The sequence is that of tRNA pseudouridine synthase B from Bartonella bacilliformis (strain ATCC 35685 / KC583 / Herrer 020/F12,63).